The sequence spans 343 residues: Coiled-coil domain-containing protein 97 (343 aa).

N-acetylmethionine is present on M1. The tract at residues M1–P37 is disordered. Position 47 is a phosphothreonine (T47). 3 disordered regions span residues A200–L220, Q234–E277, and R292–D343. Residues L224 to Q262 adopt a coiled-coil conformation. Over residues Q241–D261 the composition is skewed to acidic residues. Over residues Q262–E277 the composition is skewed to basic and acidic residues. S275 and S337 each carry phosphoserine. The span at E324–D343 shows a compositional bias: acidic residues.

In terms of assembly, associates with splicing factor SF3B complex, involved in branch-site recognition.

The protein localises to the nucleus. May play a role pre-mRNA splicing through the association with the splicing factor SF3B complex which is involved in branch-site recognition. This chain is Coiled-coil domain-containing protein 97 (CCDC97), found in Homo sapiens (Human).